The following is a 472-amino-acid chain: ATP-dependent rRNA helicase rrp3 (472 aa).

Residues 1 to 52 are disordered; sequence MRDVKKRKIAHEAPEHGSDTESTSSHKSVAQQDDPLETQDEATATESRPAPK. A compositionally biased stretch (basic and acidic residues) spans 10–19; the sequence is AHEAPEHGSD. Over residues 20–31 the composition is skewed to polar residues; that stretch reads TESTSSHKSVAQ. A Q motif motif is present at residues 52 to 80; sequence KSFKDLGIIDQLCEACETMGYKAPTPIQA. The 172-residue stretch at 83–254 folds into the Helicase ATP-binding domain; sequence IPLALQGRDL…RASLSNPLRV (172 aa). Residue 96 to 103 participates in ATP binding; the sequence is AETGSGKT. Residues 202–205 carry the DEAD box motif; that stretch reads DEAD. In terms of domain architecture, Helicase C-terminal spans 282-426; it reads YLVYLLNEFV…EYELEKDEVM (145 aa). The segment at 444–472 is disordered; that stretch reads KNFDEKRGTKAKKFGKGKRSRDEMDQEEG. A compositionally biased stretch (basic residues) spans 452-462; it reads TKAKKFGKGKR.

It belongs to the DEAD box helicase family. DDX47/RRP3 subfamily. In terms of assembly, interacts with the SSU processome.

It localises to the nucleus. The catalysed reaction is ATP + H2O = ADP + phosphate + H(+). Its function is as follows. ATP-dependent rRNA helicase required for pre-ribosomal RNA processing. Involved in the maturation of the 35S-pre-rRNA and to its cleavage to mature 18S rRNA. The sequence is that of ATP-dependent rRNA helicase rrp3 from Aspergillus fumigatus (strain ATCC MYA-4609 / CBS 101355 / FGSC A1100 / Af293) (Neosartorya fumigata).